We begin with the raw amino-acid sequence, 428 residues long: Serine--tRNA ligase (428 aa).

231-233 (TAE) lines the L-serine pocket. 262–264 (RSE) contributes to the ATP binding site. Position 285 (Glu-285) interacts with L-serine. An ATP-binding site is contributed by 349-352 (EISS). Ser-385 lines the L-serine pocket.

Belongs to the class-II aminoacyl-tRNA synthetase family. Type-1 seryl-tRNA synthetase subfamily. As to quaternary structure, homodimer. The tRNA molecule binds across the dimer.

The protein localises to the cytoplasm. The enzyme catalyses tRNA(Ser) + L-serine + ATP = L-seryl-tRNA(Ser) + AMP + diphosphate + H(+). It carries out the reaction tRNA(Sec) + L-serine + ATP = L-seryl-tRNA(Sec) + AMP + diphosphate + H(+). Its pathway is aminoacyl-tRNA biosynthesis; selenocysteinyl-tRNA(Sec) biosynthesis; L-seryl-tRNA(Sec) from L-serine and tRNA(Sec): step 1/1. Its function is as follows. Catalyzes the attachment of serine to tRNA(Ser). Is also able to aminoacylate tRNA(Sec) with serine, to form the misacylated tRNA L-seryl-tRNA(Sec), which will be further converted into selenocysteinyl-tRNA(Sec). This is Serine--tRNA ligase from Staphylococcus aureus (strain MW2).